Consider the following 835-residue polypeptide: MNEATEAWPKFKVLFATDGDSAEIITDILTGTDTNAFIYSVLHNCYIYPTEVKIVLILCLPAKKPGGGDKCLEVFQLHIDTELAIPFLFYTKPLKANDLHKYIDFKAARKNFKPILDIISTNKPSPKTHNSDIKSKIVWFRAKFVNSLRKLYKISSSPYWMITTFGSFEVPFLLTAIFYFFEQHNCTINTIFHLSSLFEKKLGTSLIAITTFEELGGVCSTSDYLKTAPAFINYCHIKLARDSLESQAIDTSIDTLRGQLMLSNQDLVHYIYLSFFQCLNKDIFIKYSHLTNSDNIHFVPETEVLAQSLDENFRKDMLTYYNKSTYLKTYITHKCIHLPDLIGYAPQDCTSFVYWAGQSKNVHNLLNVINTTHPHINISEDLNGLLDLAAIDSTFNVDNLKDCVFNESQKVPVYRCEFLNKTYFVIVQNDILKNVWSTDVLMPMQENWYMLKDTEITSNISYKETFTSMLTLRDQLKISRHEYFNPRLPVFNLVLDLDLHIHTSEHEIDEIYNLCCTLRSLILETLQLLGPVDIDTHHVYFFKSTCEKPENWIDNKELKFCYCTKKLGFRIITPLPAGVVLLGSNPVISFVNILNRTIKIDKKLLAMYPLIMETDGPFDVGIYHKGRCVRIPHTYKVNSSGRLERLLKLFVCHPHVDNKLQYVMDSFDINNLLYHSHNPEKVKQLKAVYDIADTNENFILQKAQAQLPQTNHNAVERIESASHMSITDWVAEFAWPRLFELIKLYLSEEKVSQFYHVSFAASTGNIIKIISLSGNFSCLNFKHRLKTQSVRIFLSLHLTPDNCVTLTLMSQCFASKCNSNKCIAHMSVRVPITDK.

Residues 778 to 817 form a CHC2-type zinc finger; sequence CLNFKHRLKTQSVRIFLSLHLTPDNCVTLTLMSQCFASKC.

It belongs to the herpesviridae DNA primase family. Associates with the helicase and the primase-associated factor to form the helicase-primase factor.

It localises to the host nucleus. Essential component of the helicase/primase complex. Unwinds the DNA at the replication forks and generates single-stranded DNA for both leading and lagging strand synthesis. The primase initiates primer synthesis and thereby produces large amount of short RNA primers on the lagging strand that the polymerase elongates using dNTPs. In Saimiri sciureus (Common squirrel monkey), this protein is DNA primase (56).